The sequence spans 525 residues: NAD(P)H-quinone oxidoreductase chain 4 1 (525 aa).

14 helical membrane-spanning segments follow: residues 6-26, 36-56, 91-111, 115-135, 136-156, 169-189, 212-232, 243-263, 277-297, 314-334, 335-355, 375-397, 417-437, and 464-484; these read FPWL…IPII, WYAL…FYTS, LIIL…PVTL, LFYF…AVQD, LLLF…LLAI, FILY…TMAF, LLLY…IPLH, TAPA…YALI, FAPV…LTSF, MGFV…GAVL, QMVS…ATYD, IFAM…GFVA, VIVV…LLSM, and VFVI…PKLL.

The protein belongs to the complex I subunit 4 family.

The protein resides in the cellular thylakoid membrane. The enzyme catalyses a plastoquinone + NADH + (n+1) H(+)(in) = a plastoquinol + NAD(+) + n H(+)(out). It catalyses the reaction a plastoquinone + NADPH + (n+1) H(+)(in) = a plastoquinol + NADP(+) + n H(+)(out). Its function is as follows. NDH-1 shuttles electrons from NAD(P)H, via FMN and iron-sulfur (Fe-S) centers, to quinones in the respiratory chain. The immediate electron acceptor for the enzyme in this species is believed to be plastoquinone. Couples the redox reaction to proton translocation (for every two electrons transferred, four hydrogen ions are translocated across the cytoplasmic membrane), and thus conserves the redox energy in a proton gradient. In Trichormus variabilis (strain ATCC 29413 / PCC 7937) (Anabaena variabilis), this protein is NAD(P)H-quinone oxidoreductase chain 4 1.